Consider the following 623-residue polypeptide: Translation initiation factor IF-2 (623 aa).

The span at 1–18 (MTLNKKTNNENSSKTTPK) shows a compositional bias: low complexity. 2 disordered regions span residues 1–21 (MTLN…KLSK) and 92–115 (PQKE…KLQA). One can recognise a tr-type G domain in the interval 125–293 (KTPPIVTIMG…ILLFSEIQNL (169 aa)). The G1 stretch occupies residues 134–141 (GHVDHGKT). 134 to 141 (GHVDHGKT) contributes to the GTP binding site. A G2 region spans residues 159–163 (GITQH). The tract at residues 180-183 (DTPG) is G3. Residues 180–184 (DTPGH) and 234–237 (NKVD) contribute to the GTP site. Residues 234-237 (NKVD) are G4. Residues 270–272 (SAL) are G5.

The protein belongs to the TRAFAC class translation factor GTPase superfamily. Classic translation factor GTPase family. IF-2 subfamily.

The protein localises to the cytoplasm. In terms of biological role, one of the essential components for the initiation of protein synthesis. Protects formylmethionyl-tRNA from spontaneous hydrolysis and promotes its binding to the 30S ribosomal subunits. Also involved in the hydrolysis of GTP during the formation of the 70S ribosomal complex. This chain is Translation initiation factor IF-2, found in Aster yellows witches'-broom phytoplasma (strain AYWB).